The primary structure comprises 353 residues: Photosystem II D2 protein (353 aa).

Thr2 carries the N-acetylthreonine modification. Thr2 carries the phosphothreonine modification. Residues 41–61 (CAYFALGGWLTGTTFVTSWYT) form a helical membrane-spanning segment. Chlorophyll a is bound at residue His118. A helical transmembrane segment spans residues 125 to 141 (GFMLRQFEIARSVQLRP). Pheophytin a is bound by residues Gln130 and Asn143. The helical transmembrane segment at 153 to 166 (VFVSVFLIYPLGQS) threads the bilayer. His198 is a chlorophyll a binding site. Residues 208-228 (AALLCAIHGATVENTIFEDGD) form a helical membrane-spanning segment. A plastoquinone is bound by residues His215 and Phe262. His215 lines the Fe cation pocket. His269 contacts Fe cation. The helical transmembrane segment at 279 to 295 (GLWMSAVGVVGLAVNLR) threads the bilayer.

Belongs to the reaction center PufL/M/PsbA/D family. PSII is composed of 1 copy each of membrane proteins PsbA, PsbB, PsbC, PsbD, PsbE, PsbF, PsbH, PsbI, PsbJ, PsbK, PsbL, PsbM, PsbT, PsbX, PsbY, PsbZ, Psb30/Ycf12, at least 3 peripheral proteins of the oxygen-evolving complex and a large number of cofactors. It forms dimeric complexes. The cofactor is The D1/D2 heterodimer binds P680, chlorophylls that are the primary electron donor of PSII, and subsequent electron acceptors. It shares a non-heme iron and each subunit binds pheophytin, quinone, additional chlorophylls, carotenoids and lipids. There is also a Cl(-1) ion associated with D1 and D2, which is required for oxygen evolution. The PSII complex binds additional chlorophylls, carotenoids and specific lipids..

The protein localises to the plastid. It is found in the chloroplast thylakoid membrane. It carries out the reaction 2 a plastoquinone + 4 hnu + 2 H2O = 2 a plastoquinol + O2. Photosystem II (PSII) is a light-driven water:plastoquinone oxidoreductase that uses light energy to abstract electrons from H(2)O, generating O(2) and a proton gradient subsequently used for ATP formation. It consists of a core antenna complex that captures photons, and an electron transfer chain that converts photonic excitation into a charge separation. The D1/D2 (PsbA/PsbD) reaction center heterodimer binds P680, the primary electron donor of PSII as well as several subsequent electron acceptors. D2 is needed for assembly of a stable PSII complex. In Chaetosphaeridium globosum (Charophycean green alga), this protein is Photosystem II D2 protein.